Reading from the N-terminus, the 432-residue chain is uncharacterized protein (432 aa).

The next 12 membrane-spanning stretches (helical) occupy residues 35–55 (VARVGAATALAVACVYTVIYL), 60–80 (LPPACFSIFAVFWGALGIATG), 112–132 (VAGMIGTVAAVVIAGSSPLWS), 144–164 (VGLLSVGVAGFCAQATLLGAL), 185–205 (LAVAAAAVVIGWGLAGYLWAA), 209–229 (AVAWLLMLMASPTARSAASLL), 242–262 (AHSITAAGASAILVMGFPVLL), 274–294 (GAVILAVTLTRAPLLVPLSAM), 313–333 (LIAPALVVGGIGAVGMLAAGL), 359–379 (AAAVAIAMLTLTGAAAVAAAL), 384–404 (LLGWVSATVASTLLLLLPMPL), and 408–428 (TVIALLFGPTVGIAIHVAALA).

To M.tuberculosis Rv3630 and M.bovis Mb3654.

The protein localises to the cell membrane. This is an uncharacterized protein from Mycobacterium tuberculosis (strain CDC 1551 / Oshkosh).